We begin with the raw amino-acid sequence, 239 residues long: Large ribosomal subunit protein uL30 (239 aa).

The interval 1 to 22 (MEGVMSEAPQSSIRKKEYEARM) is disordered.

Belongs to the universal ribosomal protein uL30 family.

The sequence is that of Large ribosomal subunit protein uL30 (RPL7) from Encephalitozoon cuniculi (strain GB-M1) (Microsporidian parasite).